An 86-amino-acid chain; its full sequence is Large ribosomal subunit protein bL27 (86 aa).

Positions 1-24 are disordered; it reads MAHKKAMGSTENTRDSNPSYLGVK. Polar residues predominate over residues 9-19; the sequence is STENTRDSNPS.

The protein belongs to the bacterial ribosomal protein bL27 family.

The chain is Large ribosomal subunit protein bL27 from Salinibacter ruber (strain DSM 13855 / M31).